The chain runs to 81 residues: MSHTVKIYDTCIGCTQCVRACPTDVLEMVPWDGCKAAQIASSPRTEDCVGCKRCETACPTDFLSIRVYLGAETTRSMGLAY.

4Fe-4S ferredoxin-type domains follow at residues 2-31 (SHTVKIYDTCIGCTQCVRACPTDVLEMVPW) and 39-68 (IASSPRTEDCVGCKRCETACPTDFLSIRVY). Positions 11, 14, 17, 21, 48, 51, 54, and 58 each coordinate [4Fe-4S] cluster.

In terms of assembly, the cyanobacterial PSI reaction center is composed of one copy each of PsaA,B,C,D,E,F,I,J,K,L,M and X, and forms trimeric complexes. It depends on [4Fe-4S] cluster as a cofactor.

Its subcellular location is the cellular thylakoid membrane. The enzyme catalyses reduced [plastocyanin] + hnu + oxidized [2Fe-2S]-[ferredoxin] = oxidized [plastocyanin] + reduced [2Fe-2S]-[ferredoxin]. Apoprotein for the two 4Fe-4S centers FA and FB of photosystem I (PSI); essential for photochemical activity. FB is the terminal electron acceptor of PSI, donating electrons to ferredoxin. The C-terminus interacts with PsaA/B/D and helps assemble the protein into the PSI complex. Required for binding of PsaD and PsaE to PSI. PSI is a plastocyanin/cytochrome c6-ferredoxin oxidoreductase, converting photonic excitation into a charge separation, which transfers an electron from the donor P700 chlorophyll pair to the spectroscopically characterized acceptors A0, A1, FX, FA and FB in turn. This Microchaete diplosiphon (Fremyella diplosiphon) protein is Photosystem I iron-sulfur center.